The chain runs to 284 residues: uncharacterized protein (284 aa).

The N-terminal stretch at 1 to 24 is a signal peptide; sequence MLYSRESRTTVLFLALVTSLTVLC. At 25 to 84 the chain is on the cytoplasmic side; that stretch reads HSVDVTTVFTTSTITEITTVTAAPQPQNKAETALNTATNIIQTMQFLFNCAPFKWKGPLK. A helical transmembrane segment spans residues 85–104; sequence ITSCALNFIVLLLTAWGYLL. Residues 105 to 284 are Extracellular-facing; it reads KYLQENKLNS…SVHMYSSSLL (180 aa). The N-linked (GlcNAc...) asparagine glycan is linked to N270.

To yeast YNL033w.

Its subcellular location is the cell membrane. This is an uncharacterized protein from Saccharomyces cerevisiae (strain ATCC 204508 / S288c) (Baker's yeast).